Here is a 623-residue protein sequence, read N- to C-terminus: Trehalase (623 aa).

Belongs to the glycosyl hydrolase 15 family. As to quaternary structure, monomer.

It carries out the reaction alpha,alpha-trehalose + H2O = alpha-D-glucose + beta-D-glucose. It functions in the pathway glycan degradation; trehalose degradation; D-glucose from alpha,alpha-trehalose: step 1/1. Its activity is regulated as follows. Inhibited by validamycin A. Its function is as follows. Catalyzes the hydrolysis of alpha,alpha-trehalose into two molecules of D-glucose. The sequence is that of Trehalase from Thermoplasma volcanium (strain ATCC 51530 / DSM 4299 / JCM 9571 / NBRC 15438 / GSS1).